The sequence spans 346 residues: Small ribosomal subunit biogenesis GTPase RsgA 1 (346 aa).

The region spanning 93–248 (AEQLIAANFD…VIDTPGMREF (156 aa)) is the CP-type G domain. GTP contacts are provided by residues 138–141 (TKAD) and 190–198 (GSSGVGKSS). The Zn(2+) site is built by Cys271, Cys276, His278, and Cys284.

The protein belongs to the TRAFAC class YlqF/YawG GTPase family. RsgA subfamily. In terms of assembly, monomer. Associates with 30S ribosomal subunit, binds 16S rRNA. Requires Zn(2+) as cofactor.

Its subcellular location is the cytoplasm. Its function is as follows. One of several proteins that assist in the late maturation steps of the functional core of the 30S ribosomal subunit. Helps release RbfA from mature subunits. May play a role in the assembly of ribosomal proteins into the subunit. Circularly permuted GTPase that catalyzes slow GTP hydrolysis, GTPase activity is stimulated by the 30S ribosomal subunit. The polypeptide is Small ribosomal subunit biogenesis GTPase RsgA 1 (Listeria monocytogenes serovar 1/2a (strain ATCC BAA-679 / EGD-e)).